A 425-amino-acid polypeptide reads, in one-letter code: Dihydroorotase (425 aa).

His61 and His63 together coordinate Zn(2+). Residues 63–65 (HLR) and Asn95 contribute to the substrate site. Zn(2+)-binding residues include Asp153, His180, and His233. Residue Asn279 participates in substrate binding. Zn(2+) is bound at residue Asp306. The active site involves Asp306. A substrate-binding site is contributed by His310.

This sequence belongs to the metallo-dependent hydrolases superfamily. DHOase family. Class I DHOase subfamily. Zn(2+) serves as cofactor.

It carries out the reaction (S)-dihydroorotate + H2O = N-carbamoyl-L-aspartate + H(+). It participates in pyrimidine metabolism; UMP biosynthesis via de novo pathway; (S)-dihydroorotate from bicarbonate: step 3/3. In terms of biological role, catalyzes the reversible cyclization of carbamoyl aspartate to dihydroorotate. In Geobacter sulfurreducens (strain ATCC 51573 / DSM 12127 / PCA), this protein is Dihydroorotase.